The chain runs to 194 residues: MDTAPASPEPFLVTPQAEVLEELIQAQMGPLPRLAAICRLKRLPSGGYSTTDDLHLVLERRRVANAKERERIKNLNRGFAKLKALVPFLPQSRKPSKVDILKGATEYIQILGCVLEEAKVSEKQSPEEQTHSGRPSDPHVSSTRELLGNATQPTSCASGLKKEEEGPWAYAGHSEPLYSYHQSTVPETRSYFTH.

Residues 59–111 (ERRRVANAKERERIKNLNRGFAKLKALVPFLPQSRKPSKVDILKGATEYIQIL) form the bHLH domain. Over residues 121–137 (SEKQSPEEQTHSGRPSD) the composition is skewed to basic and acidic residues. The segment at 121 to 163 (SEKQSPEEQTHSGRPSDPHVSSTRELLGNATQPTSCASGLKKE) is disordered. Over residues 139–157 (HVSSTRELLGNATQPTSCA) the composition is skewed to polar residues.

As to quaternary structure, heterodimer with TCF3/isoform E12. Expressed only in the oocytes within the ovary and at lower level in the testis. Found in the resting oocytes of the primordial follicle cells, at the periphery of the ovary and in the hilar region. Also detected in growing oocytes, but at lower levels.

It is found in the nucleus. Functionally, germ-line specific transcription factor implicated in postnatal oocyte-specific gene expression. Plays a key regulatory role in the expression of multiple oocyte-specific genes, including those that initiate folliculogenesis and those that encode the zona pellucida (ZP1, ZP2 and ZP3) required for fertilization and early embryonic survival. Essential for oocytes to survive and form primordial follicles. The persistence of FIGLA in adult females suggests that it may regulate additional pathways that are essential for normal ovarian development. Binds to the E-box (5'-CANNTG-3') of the ZPs (ZP1, ZP2, ZP3) promoters. The chain is Factor in the germline alpha (Figla) from Mus musculus (Mouse).